The primary structure comprises 547 residues: Chaperonin GroEL (547 aa).

ATP contacts are provided by residues 30 to 33 (TLGP), Lys-51, 87 to 91 (DGTTT), Gly-415, 478 to 480 (NAA), and Asp-494.

The protein belongs to the chaperonin (HSP60) family. Forms a cylinder of 14 subunits composed of two heptameric rings stacked back-to-back. Interacts with the co-chaperonin GroES.

The protein resides in the cytoplasm. It catalyses the reaction ATP + H2O + a folded polypeptide = ADP + phosphate + an unfolded polypeptide.. Functionally, together with its co-chaperonin GroES, plays an essential role in assisting protein folding. The GroEL-GroES system forms a nano-cage that allows encapsulation of the non-native substrate proteins and provides a physical environment optimized to promote and accelerate protein folding. This is Chaperonin GroEL from Geobacter sp. (strain M21).